The chain runs to 203 residues: Small ribosomal subunit protein uS5 (203 aa).

Over residues 1-18 (MENNVKKETIVDSEKVEK) the composition is skewed to basic and acidic residues. Residues 1 to 36 (MENNVKKETIVDSEKVEKQQPVTAPVVNKKENTQPK) form a disordered region. An S5 DRBM domain is found at 49-112 (FEERVVKIKR…KNANNNLIKV (64 aa)).

This sequence belongs to the universal ribosomal protein uS5 family. Part of the 30S ribosomal subunit. Contacts proteins S4 and S8.

With S4 and S12 plays an important role in translational accuracy. Functionally, located at the back of the 30S subunit body where it stabilizes the conformation of the head with respect to the body. This chain is Small ribosomal subunit protein uS5, found in Ureaplasma urealyticum serovar 10 (strain ATCC 33699 / Western).